The primary structure comprises 21 residues: Protein YmjD (21 aa).

The polypeptide is Protein YmjD (ymjD) (Escherichia coli (strain K12)).